Consider the following 622-residue polypeptide: UvrABC system protein C (622 aa).

The region spanning 12–91 is the GIY-YIG domain; it reads SSPGVYIMKD…IKKYRPKYNF (80 aa). The 36-residue stretch at 201–236 folds into the UVR domain; it reads REILKIFRERMSAAAAAEKYEKAARFRDLIRSIEVT.

Belongs to the UvrC family. As to quaternary structure, interacts with UvrB in an incision complex.

The protein localises to the cytoplasm. Its function is as follows. The UvrABC repair system catalyzes the recognition and processing of DNA lesions. UvrC both incises the 5' and 3' sides of the lesion. The N-terminal half is responsible for the 3' incision and the C-terminal half is responsible for the 5' incision. In Geotalea daltonii (strain DSM 22248 / JCM 15807 / FRC-32) (Geobacter daltonii), this protein is UvrABC system protein C.